A 151-amino-acid chain; its full sequence is Superoxide dismutase [Cu-Zn] 2 (151 aa).

Positions 44, 46, and 61 each coordinate Cu cation. Cys-55 and Cys-144 form a disulfide bridge. Zn(2+) contacts are provided by His-61, His-69, His-78, and Asp-81. Position 118 (His-118) interacts with Cu cation.

Belongs to the Cu-Zn superoxide dismutase family. Homodimer. Cu cation is required as a cofactor. Requires Zn(2+) as cofactor.

It localises to the cytoplasm. It carries out the reaction 2 superoxide + 2 H(+) = H2O2 + O2. Functionally, destroys radicals which are normally produced within the cells and which are toxic to biological systems. The polypeptide is Superoxide dismutase [Cu-Zn] 2 (SODCC.1) (Zea mays (Maize)).